The sequence spans 463 residues: Metacaspase-1 (463 aa).

Residues 1 to 149 (MSWNQYPGGG…PQLQGQGGQS (149 aa)) are disordered. Over residues 7-18 (PGGGHHQQGGYG) the composition is skewed to gly residues. Residues 20–56 (RPPPPQWAQQGPPPPPNMGYRPPPPPQAYYNNPPPPQ) are compositionally biased toward pro residues. Residues 57–83 (QYQRPAPQQNGYQQGGYQQQQQSQGNY) show a composition bias toward low complexity. Catalysis depends on residues H247 and C309.

The protein belongs to the peptidase C14B family.

Functionally, involved in cell death (apoptosis). This chain is Metacaspase-1 (MCA1), found in Cryptococcus neoformans var. neoformans serotype D (strain B-3501A) (Filobasidiella neoformans).